The primary structure comprises 171 residues: uncharacterized protein (171 aa).

The helical transmembrane segment at 21–43 threads the bilayer; the sequence is GVAASLLILLAVYTIFQSTVVIA.

Its subcellular location is the membrane. This is an uncharacterized protein from Archaeoglobus fulgidus (strain ATCC 49558 / DSM 4304 / JCM 9628 / NBRC 100126 / VC-16).